The following is a 584-amino-acid chain: Lamin-B1 (584 aa).

Positions 1 to 22 are disordered; sequence MAAAVAPLSPQPRGAAASAALS. A head region spans residues 2–33; sequence AAAVAPLSPQPRGAAASAALSPTRISRLQEKE. The residue at position 22 (serine 22) is a Phosphoserine. The IF rod domain maps to 31–387; that stretch reads EKEELRQLND…KLLESEEERL (357 aa). The interval 34 to 70 is coil 1A; the sequence is ELRQLNDRLAVYIDKVRSLETENSALQRRVSEREQVC. The tract at residues 81 to 218 is coil 1B; it reads FETELADARK…NVYEEEIKET (138 aa). Residues 243–385 are coil 2; that stretch reads QALKEIREQH…YRKLLESEEE (143 aa). Residues 386-584 form a tail region; sequence RLRLSPGPSS…RKPERSCVVM (199 aa). Disordered stretches follow at residues 388–431 and 548–584; these read RLSP…SVSI and TVNEGEEEEEEGEEEILEDVIHQQGSPRKPERSCVVM. A compositionally biased stretch (low complexity) spans 394–408; that stretch reads SSRVTVSRASSSRSV. The short motif at 414–419 is the Nuclear localization signal element; that stretch reads KRKRID. In terms of domain architecture, LTD spans 429-545; the sequence is VSISHSASAT…EEVAQRSTVF (117 aa). Positions 551–565 are enriched in acidic residues; that stretch reads EGEEEEEEGEEEILE. Residues 575-584 show a composition bias toward basic and acidic residues; that stretch reads RKPERSCVVM. Position 581 is a cysteine methyl ester (cysteine 581). Cysteine 581 is lipidated: S-farnesyl cysteine. Residues 582-584 constitute a propeptide, removed in mature form; sequence VVM.

This sequence belongs to the intermediate filament family. In terms of assembly, homodimer. Lamin dimers then assemble into dimeric head-to-tail polymers. Ultimately, two head-to-tail polymers assemble laterally into a protofilament with a uniformly shaped rod of 3.5 nm in diameter. In terms of processing, phosphorylation plays a key role in lamin organization, subcellular localization and nuclear envelope disintegration. Phosphorylation by CDK1 at Ser-22 at the onset of mitosis drives lamin disassembly and nuclear envelope breakdown.

The protein localises to the nucleus lamina. The protein resides in the nucleus envelope. Its subcellular location is the nucleus. It localises to the nucleoplasm. It is found in the nucleus matrix. Functionally, lamins are intermediate filament proteins that assemble into a filamentous meshwork, and which constitute the major components of the nuclear lamina, a fibrous layer on the nucleoplasmic side of the inner nuclear membrane. Lamins provide a framework for the nuclear envelope, bridging the nuclear envelope and chromatin. Plays an important role in nuclear assembly, chromatin organization, nuclear membrane and telomere dynamics. This is Lamin-B1 (LMNB1) from Gallus gallus (Chicken).